Here is a 315-residue protein sequence, read N- to C-terminus: 4-hydroxy-3-methylbut-2-enyl diphosphate reductase (315 aa).

Cys-18 is a [4Fe-4S] cluster binding site. (2E)-4-hydroxy-3-methylbut-2-enyl diphosphate is bound by residues His-47 and His-80. Residues His-47 and His-80 each coordinate dimethylallyl diphosphate. Residues His-47 and His-80 each coordinate isopentenyl diphosphate. Cys-102 contacts [4Fe-4S] cluster. His-130 lines the (2E)-4-hydroxy-3-methylbut-2-enyl diphosphate pocket. His-130 lines the dimethylallyl diphosphate pocket. Residue His-130 participates in isopentenyl diphosphate binding. Catalysis depends on Glu-132, which acts as the Proton donor. Position 171 (Thr-171) interacts with (2E)-4-hydroxy-3-methylbut-2-enyl diphosphate. Residue Cys-201 participates in [4Fe-4S] cluster binding. (2E)-4-hydroxy-3-methylbut-2-enyl diphosphate is bound by residues Ser-229, Ser-230, Asn-231, and Ser-274. Dimethylallyl diphosphate is bound by residues Ser-229, Ser-230, Asn-231, and Ser-274. Isopentenyl diphosphate-binding residues include Ser-229, Ser-230, Asn-231, and Ser-274.

The protein belongs to the IspH family. Requires [4Fe-4S] cluster as cofactor.

The catalysed reaction is isopentenyl diphosphate + 2 oxidized [2Fe-2S]-[ferredoxin] + H2O = (2E)-4-hydroxy-3-methylbut-2-enyl diphosphate + 2 reduced [2Fe-2S]-[ferredoxin] + 2 H(+). It carries out the reaction dimethylallyl diphosphate + 2 oxidized [2Fe-2S]-[ferredoxin] + H2O = (2E)-4-hydroxy-3-methylbut-2-enyl diphosphate + 2 reduced [2Fe-2S]-[ferredoxin] + 2 H(+). It functions in the pathway isoprenoid biosynthesis; dimethylallyl diphosphate biosynthesis; dimethylallyl diphosphate from (2E)-4-hydroxy-3-methylbutenyl diphosphate: step 1/1. It participates in isoprenoid biosynthesis; isopentenyl diphosphate biosynthesis via DXP pathway; isopentenyl diphosphate from 1-deoxy-D-xylulose 5-phosphate: step 6/6. Its function is as follows. Catalyzes the conversion of 1-hydroxy-2-methyl-2-(E)-butenyl 4-diphosphate (HMBPP) into a mixture of isopentenyl diphosphate (IPP) and dimethylallyl diphosphate (DMAPP). Acts in the terminal step of the DOXP/MEP pathway for isoprenoid precursor biosynthesis. The protein is 4-hydroxy-3-methylbut-2-enyl diphosphate reductase of Hyphomonas neptunium (strain ATCC 15444).